A 157-amino-acid polypeptide reads, in one-letter code: 17.8 kDa class I heat shock protein (157 aa).

A sHSP domain is found at 41–156 (ETSAITNARV…KAQVKSIDIS (116 aa)).

This sequence belongs to the small heat shock protein (HSP20) family. As to quaternary structure, homodimer under normal physiological conditions. Aggregates in high oligomeric complexes after heat shock. Binds to AKR2A and to chloroplasts. As to expression, expressed ubiquitously at low levels under normal physiological conditions.

It localises to the cytoplasm. Functionally, cytosolic mediator for sorting and targeting of nascent chloroplast outer envelope membrane (OEM) proteins to the chloroplast. Functions as an AKR2A cofactor to facilitate the targeting of OEP7 to chloroplasts. In Arabidopsis thaliana (Mouse-ear cress), this protein is 17.8 kDa class I heat shock protein (HSP17.8).